The sequence spans 87 residues: Exodeoxyribonuclease 7 small subunit (87 aa).

This sequence belongs to the XseB family. As to quaternary structure, heterooligomer composed of large and small subunits.

It is found in the cytoplasm. The enzyme catalyses Exonucleolytic cleavage in either 5'- to 3'- or 3'- to 5'-direction to yield nucleoside 5'-phosphates.. In terms of biological role, bidirectionally degrades single-stranded DNA into large acid-insoluble oligonucleotides, which are then degraded further into small acid-soluble oligonucleotides. In Xanthomonas campestris pv. campestris (strain 8004), this protein is Exodeoxyribonuclease 7 small subunit.